Consider the following 509-residue polypeptide: ATP synthase subunit alpha (509 aa).

169–176 (GDRQTGKT) serves as a coordination point for ATP.

The protein belongs to the ATPase alpha/beta chains family. As to quaternary structure, F-type ATPases have 2 components, CF(1) - the catalytic core - and CF(0) - the membrane proton channel. CF(1) has five subunits: alpha(3), beta(3), gamma(1), delta(1), epsilon(1). CF(0) has three main subunits: a(1), b(2) and c(9-12). The alpha and beta chains form an alternating ring which encloses part of the gamma chain. CF(1) is attached to CF(0) by a central stalk formed by the gamma and epsilon chains, while a peripheral stalk is formed by the delta and b chains.

It localises to the cell inner membrane. It catalyses the reaction ATP + H2O + 4 H(+)(in) = ADP + phosphate + 5 H(+)(out). In terms of biological role, produces ATP from ADP in the presence of a proton gradient across the membrane. The alpha chain is a regulatory subunit. The sequence is that of ATP synthase subunit alpha from Zymomonas mobilis subsp. mobilis (strain ATCC 31821 / ZM4 / CP4).